The sequence spans 208 residues: Imidazole glycerol phosphate synthase subunit HisH (208 aa).

The region spanning 1 to 206 is the Glutamine amidotransferase type-1 domain; sequence MIVIIDYDTG…KEVIRSCKSS (206 aa). Residue Cys79 is the Nucleophile of the active site. Catalysis depends on residues His181 and Glu183.

Heterodimer of HisH and HisF.

It localises to the cytoplasm. It carries out the reaction 5-[(5-phospho-1-deoxy-D-ribulos-1-ylimino)methylamino]-1-(5-phospho-beta-D-ribosyl)imidazole-4-carboxamide + L-glutamine = D-erythro-1-(imidazol-4-yl)glycerol 3-phosphate + 5-amino-1-(5-phospho-beta-D-ribosyl)imidazole-4-carboxamide + L-glutamate + H(+). The enzyme catalyses L-glutamine + H2O = L-glutamate + NH4(+). The protein operates within amino-acid biosynthesis; L-histidine biosynthesis; L-histidine from 5-phospho-alpha-D-ribose 1-diphosphate: step 5/9. Its function is as follows. IGPS catalyzes the conversion of PRFAR and glutamine to IGP, AICAR and glutamate. The HisH subunit catalyzes the hydrolysis of glutamine to glutamate and ammonia as part of the synthesis of IGP and AICAR. The resulting ammonia molecule is channeled to the active site of HisF. The chain is Imidazole glycerol phosphate synthase subunit HisH from Listeria welshimeri serovar 6b (strain ATCC 35897 / DSM 20650 / CCUG 15529 / CIP 8149 / NCTC 11857 / SLCC 5334 / V8).